We begin with the raw amino-acid sequence, 239 residues long: Probable transcriptional regulatory protein Pnuc_0618 (239 aa).

Residues 1–21 (MAGHSKWANIQHRKGRQDEKR) are disordered.

Belongs to the TACO1 family.

It is found in the cytoplasm. This is Probable transcriptional regulatory protein Pnuc_0618 from Polynucleobacter asymbioticus (strain DSM 18221 / CIP 109841 / QLW-P1DMWA-1) (Polynucleobacter necessarius subsp. asymbioticus).